We begin with the raw amino-acid sequence, 95 residues long: Glutamyl-tRNA(Gln) amidotransferase subunit C (95 aa).

The protein belongs to the GatC family. As to quaternary structure, heterotrimer of A, B and C subunits.

The enzyme catalyses L-glutamyl-tRNA(Gln) + L-glutamine + ATP + H2O = L-glutaminyl-tRNA(Gln) + L-glutamate + ADP + phosphate + H(+). It carries out the reaction L-aspartyl-tRNA(Asn) + L-glutamine + ATP + H2O = L-asparaginyl-tRNA(Asn) + L-glutamate + ADP + phosphate + 2 H(+). Its function is as follows. Allows the formation of correctly charged Asn-tRNA(Asn) or Gln-tRNA(Gln) through the transamidation of misacylated Asp-tRNA(Asn) or Glu-tRNA(Gln) in organisms which lack either or both of asparaginyl-tRNA or glutaminyl-tRNA synthetases. The reaction takes place in the presence of glutamine and ATP through an activated phospho-Asp-tRNA(Asn) or phospho-Glu-tRNA(Gln). The sequence is that of Glutamyl-tRNA(Gln) amidotransferase subunit C from Rhizobium meliloti (strain 1021) (Ensifer meliloti).